The following is a 187-amino-acid chain: Probable nicotinate-nucleotide adenylyltransferase (187 aa).

This sequence belongs to the NadD family.

It catalyses the reaction nicotinate beta-D-ribonucleotide + ATP + H(+) = deamido-NAD(+) + diphosphate. Its pathway is cofactor biosynthesis; NAD(+) biosynthesis; deamido-NAD(+) from nicotinate D-ribonucleotide: step 1/1. Its function is as follows. Catalyzes the reversible adenylation of nicotinate mononucleotide (NaMN) to nicotinic acid adenine dinucleotide (NaAD). This chain is Probable nicotinate-nucleotide adenylyltransferase, found in Anaeromyxobacter dehalogenans (strain 2CP-C).